The chain runs to 267 residues: Hydroxyethylthiazole kinase 2 (267 aa).

M41 contributes to the substrate binding site. K116 and T166 together coordinate ATP. G193 is a substrate binding site.

Belongs to the Thz kinase family. Mg(2+) serves as cofactor.

It carries out the reaction 5-(2-hydroxyethyl)-4-methylthiazole + ATP = 4-methyl-5-(2-phosphooxyethyl)-thiazole + ADP + H(+). The protein operates within cofactor biosynthesis; thiamine diphosphate biosynthesis; 4-methyl-5-(2-phosphoethyl)-thiazole from 5-(2-hydroxyethyl)-4-methylthiazole: step 1/1. Functionally, catalyzes the phosphorylation of the hydroxyl group of 4-methyl-5-beta-hydroxyethylthiazole (THZ). The chain is Hydroxyethylthiazole kinase 2 from Streptococcus pneumoniae (strain Taiwan19F-14).